A 57-amino-acid chain; its full sequence is UPF0509 protein YciZ (57 aa).

This sequence belongs to the UPF0509 family.

This Escherichia coli O127:H6 (strain E2348/69 / EPEC) protein is UPF0509 protein YciZ.